The following is a 147-amino-acid chain: Sulfur acceptor protein CsdE (147 aa).

The Cysteine persulfide intermediate role is filled by Cys-61. Cys-61 bears the Cysteine persulfide mark.

Belongs to the SufE family. In terms of assembly, homodimer. Forms a heterodimer with CsdA. Interacts with CsdA and with TcdA/CsdL.

Its function is as follows. Stimulates the cysteine desulfurase activity of CsdA. Contains a cysteine residue (Cys-61) that acts to accept sulfur liberated via the desulfurase activity of CsdA. May be able to transfer sulfur to TcdA/CsdL. Seems to support the function of TcdA in the generation of cyclic threonylcarbamoyladenosine at position 37 (ct(6)A37) in tRNAs that read codons beginning with adenine. Does not appear to participate in Fe/S biogenesis. This chain is Sulfur acceptor protein CsdE (csdE), found in Escherichia coli (strain K12).